The following is a 369-amino-acid chain: IST1-like protein (369 aa).

A coiled-coil region spans residues 12-59; that stretch reads KLKVQLKLAVSRIQILKNKKANIVRDEKRNVAELLRKKNEESARIRVE. The disordered stretch occupies residues 224 to 354; it reads QIIQQQQQPQ…SSDTGYPDYD (131 aa). Low complexity-rich tracts occupy residues 225–239 and 246–270; these read IIQQQQQPQMPSFPI and PTFSQIQHQQQIQQQYQQQQQSPQF. The span at 277 to 305 shows a compositional bias: polar residues; sequence FYNNNSGNQTPQFPTISTNNSDGYSNDKF. Over residues 306–337 the composition is skewed to low complexity; it reads NNGNNNYNNNNNNNNNNNNNNNHNNNNNNNNN.

This sequence belongs to the IST1 family.

This chain is IST1-like protein, found in Dictyostelium discoideum (Social amoeba).